Consider the following 184-residue polypeptide: MKIQDYTKEMVDEKSFIDMAHTLLEEKGTTMNLYDIIDEFKALGHYEDDEHLENRIVQFYTDLNTDGRFLNVGENNWGLRDWYSVDDIEEKIAPTIQKFDILDEDDEEDKNLKLLGEEEEEIDDQETAEADAEDDDEDLDDPQDEEEINDSDIVIEEDKDEMDEAEQLFEEEEDFNDDPDDDKI.

The HTH HARE-type domain occupies 14–82; it reads KSFIDMAHTL…GENNWGLRDW (69 aa). A disordered region spans residues 114–184; it reads LLGEEEEEID…FNDDPDDDKI (71 aa). The segment covering 117 to 184 has biased composition (acidic residues); sequence EEEEEIDDQE…FNDDPDDDKI (68 aa).

Belongs to the RpoE family. In terms of assembly, RNAP is composed of a core of 2 alpha, a beta and a beta' subunits. The core is associated with a delta subunit and one of several sigma factors.

In terms of biological role, participates in both the initiation and recycling phases of transcription. In the presence of the delta subunit, RNAP displays an increased specificity of transcription, a decreased affinity for nucleic acids, and an increased efficiency of RNA synthesis because of enhanced recycling. The chain is Probable DNA-directed RNA polymerase subunit delta from Staphylococcus carnosus (strain TM300).